Consider the following 257-residue polypeptide: Acetylglutamate kinase (257 aa).

Substrate contacts are provided by residues 43 to 44, arginine 65, and asparagine 157; that span reads GG. ATP is bound by residues 180 to 185 and 208 to 210; these read DVSGIL and IIT.

It belongs to the acetylglutamate kinase family. ArgB subfamily. As to quaternary structure, homodimer.

Its subcellular location is the cytoplasm. It carries out the reaction N-acetyl-L-glutamate + ATP = N-acetyl-L-glutamyl 5-phosphate + ADP. Its pathway is amino-acid biosynthesis; L-arginine biosynthesis; N(2)-acetyl-L-ornithine from L-glutamate: step 2/4. Catalyzes the ATP-dependent phosphorylation of N-acetyl-L-glutamate. The polypeptide is Acetylglutamate kinase (Proteus mirabilis (strain HI4320)).